The following is a 165-amino-acid chain: 2-C-methyl-D-erythritol 2,4-cyclodiphosphate synthase (165 aa).

The a divalent metal cation site is built by aspartate 11 and histidine 13. 4-CDP-2-C-methyl-D-erythritol 2-phosphate is bound by residues 11–13 (DVH) and 40–41 (HS). An a divalent metal cation-binding site is contributed by histidine 48. 4-CDP-2-C-methyl-D-erythritol 2-phosphate contacts are provided by residues 62–64 (DIG), 67–71 (FPDTD), 137–140 (TTSE), phenylalanine 144, and arginine 147.

It belongs to the IspF family. Homotrimer. The cofactor is a divalent metal cation.

The catalysed reaction is 4-CDP-2-C-methyl-D-erythritol 2-phosphate = 2-C-methyl-D-erythritol 2,4-cyclic diphosphate + CMP. Its pathway is isoprenoid biosynthesis; isopentenyl diphosphate biosynthesis via DXP pathway; isopentenyl diphosphate from 1-deoxy-D-xylulose 5-phosphate: step 4/6. Its function is as follows. Involved in the biosynthesis of isopentenyl diphosphate (IPP) and dimethylallyl diphosphate (DMAPP), two major building blocks of isoprenoid compounds. Catalyzes the conversion of 4-diphosphocytidyl-2-C-methyl-D-erythritol 2-phosphate (CDP-ME2P) to 2-C-methyl-D-erythritol 2,4-cyclodiphosphate (ME-CPP) with a corresponding release of cytidine 5-monophosphate (CMP). In Rubrobacter xylanophilus (strain DSM 9941 / JCM 11954 / NBRC 16129 / PRD-1), this protein is 2-C-methyl-D-erythritol 2,4-cyclodiphosphate synthase.